A 320-amino-acid chain; its full sequence is Bifunctional phosphoglucose/phosphomannose isomerase (320 aa).

The SIS domain maps to 20-153 (IAKDLTPYKG…NLLGVDKDEL (134 aa)). The D-fructose 6-phosphate site is built by Gly-37, Ser-38, Ser-80, Ser-82, Thr-85, and Arg-132. Glu-204 (proton acceptor) is an active-site residue. Residues His-220 and Lys-313 each contribute to the D-fructose 6-phosphate site. The active-site Proton donor is the His-220. Lys-313 acts as the Proton acceptor in catalysis.

This sequence belongs to the PGI/PMI family. Homodimer.

The catalysed reaction is alpha-D-glucose 6-phosphate = beta-D-fructose 6-phosphate. The enzyme catalyses D-mannose 6-phosphate = D-fructose 6-phosphate. Its function is as follows. Dual specificity isomerase that catalyzes the isomerization of both glucose-6-phosphate and mannose-6-phosphate to fructose-6-phosphate. This chain is Bifunctional phosphoglucose/phosphomannose isomerase, found in Aquifex aeolicus (strain VF5).